We begin with the raw amino-acid sequence, 858 residues long: Leucine--tRNA ligase (858 aa).

The 'HIGH' region signature appears at 42–52; sequence PYPSGRLHMGH. The 'KMSKS' region signature appears at 618-622; that stretch reads KMSKS. Residue K621 coordinates ATP.

Belongs to the class-I aminoacyl-tRNA synthetase family.

It localises to the cytoplasm. It catalyses the reaction tRNA(Leu) + L-leucine + ATP = L-leucyl-tRNA(Leu) + AMP + diphosphate. In Aliivibrio fischeri (strain ATCC 700601 / ES114) (Vibrio fischeri), this protein is Leucine--tRNA ligase.